A 348-amino-acid polypeptide reads, in one-letter code: A-type ATP synthase subunit C (348 aa).

This sequence belongs to the V-ATPase V0D/AC39 subunit family. Has multiple subunits with at least A(3), B(3), C, D, E, F, H, I and proteolipid K(x).

It is found in the cell membrane. Its function is as follows. Component of the A-type ATP synthase that produces ATP from ADP in the presence of a proton gradient across the membrane. The polypeptide is A-type ATP synthase subunit C (Halorubrum lacusprofundi (strain ATCC 49239 / DSM 5036 / JCM 8891 / ACAM 34)).